The sequence spans 54 residues: Large ribosomal subunit protein bL33B (54 aa).

Belongs to the bacterial ribosomal protein bL33 family.

In Streptomyces coelicolor (strain ATCC BAA-471 / A3(2) / M145), this protein is Large ribosomal subunit protein bL33B (rpmG2).